The chain runs to 264 residues: Cell division protein DivIB (264 aa).

Topologically, residues 1–23 (MAVYEERIPQVKQQRPRRRGNRK) are cytoplasmic. The chain crosses the membrane as a helical span at residues 24 to 44 (LVFLLVLFFLTILIIVFIRSP). Residues 45–264 (YSKVQEIRVT…GQEQPQQPQQ (220 aa)) are Extracellular-facing. The 69-residue stretch at 46-114 (SKVQEIRVTG…GLITLHITEQ (69 aa)) folds into the POTRA domain.

This sequence belongs to the FtsQ/DivIB family. DivIB subfamily.

The protein localises to the cell membrane. Cell division protein that may be involved in stabilizing or promoting the assembly of the division complex. The sequence is that of Cell division protein DivIB from Brevibacillus brevis (strain 47 / JCM 6285 / NBRC 100599).